The primary structure comprises 589 residues: F-box only protein 24 (589 aa).

The 47-residue stretch at 23–69 folds into the F-box domain; sequence PISVQLFPPELVEHIVSFLPVKDLVALGQTCHYFHEVCDAEGVWRRI. The stretch at 386-435 is one RCC1 repeat; it reads GRIFMQGNNRYGQLGTGDKMDRGEPTQVHYLQRPIALWCGLNHSLVLSQT. Positions 506–526 are disordered; the sequence is VGGSPEPSQGAGAPQDPGGTA.

In terms of assembly, directly interacts with SKP1 and CUL1.

Functionally, substrate-recognition component of the SCF (SKP1-CUL1-F-box protein)-type E3 ubiquitin ligase complex. In Mus musculus (Mouse), this protein is F-box only protein 24 (Fbxo24).